We begin with the raw amino-acid sequence, 282 residues long: Large ribosomal subunit protein uL2 (282 aa).

Disordered stretches follow at residues 31–54 (KRLTKPVRKSGGRNAHGKVTTRHI) and 223–282 (LAMN…NTQR). 2 stretches are compositionally biased toward basic residues: residues 34–54 (TKPVRKSGGRNAHGKVTTRHI) and 270–282 (VTRRRPGVRNTQR).

The protein belongs to the universal ribosomal protein uL2 family. In terms of assembly, part of the 50S ribosomal subunit. Forms a bridge to the 30S subunit in the 70S ribosome.

Functionally, one of the primary rRNA binding proteins. Required for association of the 30S and 50S subunits to form the 70S ribosome, for tRNA binding and peptide bond formation. It has been suggested to have peptidyltransferase activity; this is somewhat controversial. Makes several contacts with the 16S rRNA in the 70S ribosome. The polypeptide is Large ribosomal subunit protein uL2 (Anaeromyxobacter dehalogenans (strain 2CP-1 / ATCC BAA-258)).